The sequence spans 307 residues: Sesquiterpene synthase-like protein Agr10 (307 aa).

The disordered stretch occupies residues 287–307 (GRYFGDRGPENQSDIPTSSNR). Residues 296-307 (ENQSDIPTSSNR) are compositionally biased toward polar residues.

The protein belongs to the terpene synthase family.

The sequence is that of Sesquiterpene synthase-like protein Agr10 from Cyclocybe aegerita (Black poplar mushroom).